A 340-amino-acid chain; its full sequence is Glyceraldehyde-3-phosphate dehydrogenase 2 (340 aa).

NADP(+) is bound by residues 12-13 (RI), Arg-78, and Thr-120. Residues 151-153 (SCT) and Thr-182 each bind D-glyceraldehyde 3-phosphate. Cys-152 acts as the Nucleophile in catalysis. NADP(+) is bound at residue Asn-183. D-glyceraldehyde 3-phosphate is bound by residues Arg-197, 210-211 (TG), and Arg-233. Asn-315 lines the NADP(+) pocket.

The protein belongs to the glyceraldehyde-3-phosphate dehydrogenase family. As to quaternary structure, homotetramer. Interacts with BrxC. Post-translationally, in response to oxidative stress, the active site Cys likely reacts with bacillithiol (BSH) to form mixed disulfides to protect the Cys residue against overoxidation. S-bacillithiolation presumably leads to loss of catalytic activity. Debacillithiolation by monothiol bacilliredoxin BrxC restores the activity.

The protein localises to the cytoplasm. It carries out the reaction D-glyceraldehyde 3-phosphate + phosphate + NADP(+) = (2R)-3-phospho-glyceroyl phosphate + NADPH + H(+). The catalysed reaction is D-glyceraldehyde 3-phosphate + phosphate + NAD(+) = (2R)-3-phospho-glyceroyl phosphate + NADH + H(+). It functions in the pathway carbohydrate biosynthesis; gluconeogenesis. Its function is as follows. Involved in the gluconeogenesis. Catalyzes the oxidative phosphorylation of glyceraldehyde 3-phosphate (G3P) to 1,3-bisphosphoglycerate (BPG) using the cofactor NADP. The first reaction step involves the formation of a hemiacetal intermediate between G3P and a cysteine residue, and this hemiacetal intermediate is then oxidized to a thioester, with concomitant reduction of NADP to NADPH. The reduced NADPH is then exchanged with the second NADP, and the thioester is attacked by a nucleophilic inorganic phosphate to produce BPG. The polypeptide is Glyceraldehyde-3-phosphate dehydrogenase 2 (Bacillus subtilis (strain 168)).